Consider the following 408-residue polypeptide: Heparan-sulfate 6-O-sulfotransferase 1 (408 aa).

Residues 8–14 (MVERTSK) are Cytoplasmic-facing. Residues 15–35 (FLLIVAASVCFMLILYQYVGP) traverse the membrane as a helical; Signal-anchor for type II membrane protein segment. The Lumenal portion of the chain corresponds to 36 to 408 (GLSLGAPSGR…DYMSHIIEKW (373 aa)). 3'-phosphoadenylyl sulfate is bound at residue 90–98 (HIQKTGGTT). Residues 120–121 (KK), arginine 137, tryptophan 142, and histidine 147 each bind substrate. The active-site Proton acceptor is histidine 147. Arginine 182 and serine 190 together coordinate 3'-phosphoadenylyl sulfate. Positions 194 and 201 each coordinate substrate. N-linked (GlcNAc...) asparagine glycosylation occurs at asparagine 261. Residue 314–316 (MQY) participates in 3'-phosphoadenylyl sulfate binding. A glycan (N-linked (GlcNAc...) asparagine) is linked at asparagine 317. Position 320 to 321 (320 to 321 (RA)) interacts with 3'-phosphoadenylyl sulfate. Asparagine 328 carries N-linked (GlcNAc...) asparagine glycosylation. Positions 348-382 (AKDLFQQRYQYKRQLERMEQRIKNREERLLHRSNE) form a coiled coil. The interval 376–396 (LLHRSNEALPKEETEEQGRLP) is disordered.

Belongs to the sulfotransferase 6 family. Post-translationally, N-glycosylated.

It localises to the membrane. It catalyses the reaction alpha-D-glucosaminyl-[heparan sulfate](n) + 3'-phosphoadenylyl sulfate = 6-sulfo-alpha-D-glucosaminyl-[heparan sulfate](n) + adenosine 3',5'-bisphosphate + H(+). 6-O-sulfation enzyme which catalyzes the transfer of sulfate from 3'-phosphoadenosine 5'-phosphosulfate (PAPS) to position 6 of the N-sulfoglucosamine residue (GlcNS) of heparan sulfate. May also play a role in limb development. The polypeptide is Heparan-sulfate 6-O-sulfotransferase 1 (Gallus gallus (Chicken)).